Here is a 67-residue protein sequence, read N- to C-terminus: Conotoxin Cal12.1p2 (67 aa).

A propeptide spanning residues 1–21 (DLITNSYTRGKPRHVTSWRNL) is cleaved from the precursor.

Contains 4 disulfide bonds. Expressed by the venom duct.

It localises to the secreted. This chain is Conotoxin Cal12.1p2, found in Californiconus californicus (California cone).